The chain runs to 198 residues: Guanylate kinase (198 aa).

The region spanning 8–188 (GRVVVLSGPS…ACSELVSLLV (181 aa)) is the Guanylate kinase-like domain. Position 15–22 (15–22 (GPSAVGKS)) interacts with ATP.

The protein belongs to the guanylate kinase family.

Its subcellular location is the cytoplasm. It carries out the reaction GMP + ATP = GDP + ADP. Its function is as follows. Essential for recycling GMP and indirectly, cGMP. The sequence is that of Guanylate kinase from Mycobacterium sp. (strain MCS).